Consider the following 315-residue polypeptide: Acetaldehyde dehydrogenase 2 (315 aa).

Residue 13–16 participates in NAD(+) binding; it reads SGNI. Cysteine 131 acts as the Acyl-thioester intermediate in catalysis. Residues 162-170 and asparagine 290 contribute to the NAD(+) site; that span reads SAGPGTRAN.

This sequence belongs to the acetaldehyde dehydrogenase family.

It carries out the reaction acetaldehyde + NAD(+) + CoA = acetyl-CoA + NADH + H(+). This is Acetaldehyde dehydrogenase 2 from Pseudomonas putida (strain W619).